Consider the following 475-residue polypeptide: MNLFFEKTEATNVAEFSVSEIAGALKRVVEERFGYVRVRGEISGYRGAHASGHVYFSLKDDKARLEAVIWRGIMEKLKFPPEEGMEVIAVGKLTTYPGSSKYQIVIEALEPTGVGALMTLLENRKKKLADEGLFDEAKKKPLPYMPRIIGVVTSPTGAVIRDIIHRISDRFPLHILVWPVRVQGDTSGREVADALKGFNALPFGGLVPKPDLIIVARGGGSLEDLWGFNDEAVVRAVYESALPVISAVGHETDWTLIDYVADWRAPTPTGAAERAVPVKLDLEVQVASLGARLRMGLARYFDFHQQKLRALVRGLPTVDQLFALPRRGFDEISSRLQRALCVSCDKKRFYFHGLNLRLSPRLLNTEKELRNTKEYTARLHRAFVRNVEKQRAQLEVASRLLKSTSYQNILERGFVLALGPDNKLIKRLVQFPETGQINLRFFDGEMSVSARDHGLNRSSKSKRIKSKQDDQGTLF.

Positions 452 to 475 (DHGLNRSSKSKRIKSKQDDQGTLF) are disordered. Residues 466-475 (SKQDDQGTLF) are compositionally biased toward basic and acidic residues.

It belongs to the XseA family. As to quaternary structure, heterooligomer composed of large and small subunits.

Its subcellular location is the cytoplasm. It carries out the reaction Exonucleolytic cleavage in either 5'- to 3'- or 3'- to 5'-direction to yield nucleoside 5'-phosphates.. Bidirectionally degrades single-stranded DNA into large acid-insoluble oligonucleotides, which are then degraded further into small acid-soluble oligonucleotides. This chain is Exodeoxyribonuclease 7 large subunit, found in Bartonella quintana (strain Toulouse) (Rochalimaea quintana).